Consider the following 207-residue polypeptide: MWGIKGSFAVLLLLFLAYIFASSVNADSLSAPLNVTIKALEGNSAIVTWDILEGDPVIGFAITQQKKDVRMLRFIQEVNTTTRSCALWDLEEDTEYIVHVQSISMSGTSPPSEPVLFRTPKESEKLASKSPDEVTMEEVGQAAQLRAGELIIIVVVLVMWAGVIALFCRQYDIIKDNEPNNNKDKAKNSSECSTPEHPTGGLLRSKV.

An N-terminal signal peptide occupies residues 1–26; sequence MWGIKGSFAVLLLLFLAYIFASSVNA. Over 27–146 the chain is Extracellular; sequence DSLSAPLNVT…EEVGQAAQLR (120 aa). One can recognise a Fibronectin type-III domain in the interval 31-122; it reads APLNVTIKAL…EPVLFRTPKE (92 aa). N-linked (GlcNAc...) asparagine glycosylation is found at Asn-34 and Asn-79. The chain crosses the membrane as a helical span at residues 147-167; it reads AGELIIIVVVLVMWAGVIALF. Residues 168–207 lie on the Cytoplasmic side of the membrane; the sequence is CRQYDIIKDNEPNNNKDKAKNSSECSTPEHPTGGLLRSKV. Residues 178-188 are compositionally biased toward basic and acidic residues; it reads EPNNNKDKAKN. Residues 178–207 are disordered; that stretch reads EPNNNKDKAKNSSECSTPEHPTGGLLRSKV. The Microbody targeting signal signature appears at 205–207; the sequence is SKV.

As to quaternary structure, dimer; may exist in other oligomeric forms. The extracellular domain is cleaved and released from the cell membrane.

It localises to the cell membrane. The protein localises to the peroxisome membrane. Its subcellular location is the secreted. In terms of biological role, may mediate beneficial effects of muscular exercise. The protein is Fibronectin type III domain-containing protein 5b (fndc5b) of Danio rerio (Zebrafish).